The sequence spans 581 residues: DEAD-box ATP-dependent RNA helicase 22 (581 aa).

The Q motif motif lies at 80–108 (VSWKSLGLSDNVSIALRDSGFDRPSLTQA). One can recognise a Helicase ATP-binding domain in the interval 111-380 (IPSILSGKDV…GGILKHMFQD (270 aa)). Residue 124–131 (AETGSGKT) coordinates ATP. The DEAD box motif lies at 244–247 (DEAD). Residues 408 to 566 (QVDALIEAVK…GFRNKVKKRA (159 aa)) enclose the Helicase C-terminal domain.

Belongs to the DEAD box helicase family.

It catalyses the reaction ATP + H2O = ADP + phosphate + H(+). In Arabidopsis thaliana (Mouse-ear cress), this protein is DEAD-box ATP-dependent RNA helicase 22 (RH22).